A 181-amino-acid chain; its full sequence is Oligoribonuclease (181 aa).

An Exonuclease domain is found at 8–171 (LIWIDLEMTG…DDIRESIAEL (164 aa)). Residue tyrosine 129 is part of the active site.

It belongs to the oligoribonuclease family.

It is found in the cytoplasm. Its function is as follows. 3'-to-5' exoribonuclease specific for small oligoribonucleotides. This chain is Oligoribonuclease, found in Vibrio vulnificus (strain CMCP6).